The chain runs to 341 residues: GTPase Obg (341 aa).

The region spanning 1 to 159 (MKFLDQAKVY…RTLWLRLKLI (159 aa)) is the Obg domain. In terms of domain architecture, OBG-type G spans 160 to 327 (ADAGLIGLPN…MLRAGAHMIE (168 aa)). Residues 166 to 173 (GLPNAGKS), 191 to 195 (FTTLY), 212 to 215 (DIPG), 279 to 282 (SQID), and 308 to 310 (SAV) each bind GTP. Residues Ser173 and Thr193 each contribute to the Mg(2+) site.

The protein belongs to the TRAFAC class OBG-HflX-like GTPase superfamily. OBG GTPase family. As to quaternary structure, monomer. The cofactor is Mg(2+).

It localises to the cytoplasm. In terms of biological role, an essential GTPase which binds GTP, GDP and possibly (p)ppGpp with moderate affinity, with high nucleotide exchange rates and a fairly low GTP hydrolysis rate. Plays a role in control of the cell cycle, stress response, ribosome biogenesis and in those bacteria that undergo differentiation, in morphogenesis control. This chain is GTPase Obg, found in Bartonella quintana (strain Toulouse) (Rochalimaea quintana).